We begin with the raw amino-acid sequence, 645 residues long: Sodium/hydrogen exchanger 9 (645 aa).

Topologically, residues 1-20 (MERQSRVMSEKDEYQFQHQG) are lumenal. The helical transmembrane segment at 21 to 41 (AVELLVFNFLLILTILTIWLF) threads the bilayer. The Cytoplasmic portion of the chain corresponds to 42-45 (KNHR). A helical membrane pass occupies residues 46-66 (FRFLHETGGAMVYGLIMGLIL). Residues 67–126 (RYATAPTDIESGTVYDCVKLTFSPSTLLVNITDQVYEYKYKREISQHNINPHQGNAILEK) are Lumenal-facing. Asparagine 96 is a glycosylation site (N-linked (GlcNAc...) asparagine). A helical membrane pass occupies residues 127 to 147 (MTFDPEIFFNVLLPPIIFHAG). Residues 148 to 164 (YSLKKRHFFQNLGSILT) lie on the Cytoplasmic side of the membrane. A helical transmembrane segment spans residues 165–185 (YAFLGTAISCIVIGLIMYGFV). Topologically, residues 186 to 203 (KAMIHAGQLKNGDFHFTD) are lumenal. A helical transmembrane segment spans residues 204–224 (CLFFGSLMSATDPVTVLAIFH). The Cytoplasmic segment spans residues 225-235 (ELHVDPDLYTL). A helical membrane pass occupies residues 236–256 (LFGESVLNDAVAIVLTYSISI). Over 257-277 (YSPKENPNAFDAAAFFQSVGN) the chain is Lumenal. Residues 278–298 (FLGIFAGSFAMGSAYAIITAL) traverse the membrane as a helical segment. Over 299-301 (LTK) the chain is Cytoplasmic. 2 consecutive transmembrane segments (helical) span residues 302 to 322 (FTKL…LSWS) and 323 to 343 (AFLS…FCGV). Residues 344–364 (TQAHYTYNNLSSDSKIRTKQL) lie on the Cytoplasmic side of the membrane. A helical membrane pass occupies residues 365–385 (FEFMNFLAENVIFCYMGLALF). Threonine 386 is a topological domain (lumenal). Residues 387–407 (FQNHIFNALFILGAFLAIFVA) traverse the membrane as a helical segment. Residues 408–429 (RACNIYPLSFLLNLGRKQKIPW) are Cytoplasmic-facing. A helical membrane pass occupies residues 430–450 (NFQHMMMFSGLRGAIAFALAI). Residues 451–465 (RNTESQPKQMMFTTT) are Lumenal-facing. The helical transmembrane segment at 466–486 (LLLVFFTVWVFGGGTTPMLTW) threads the bilayer. The Cytoplasmic segment spans residues 487–645 (LQIRVGVDLD…EQTLGQSQLN (159 aa)). Residues 594-622 (QASSPCSPPARLGLDQKASPQTPGKENIY) are disordered.

Belongs to the monovalent cation:proton antiporter 1 (CPA1) transporter (TC 2.A.36) family. Homodimer; phosphatidylinositol-4,5-bisphosphate (PIP2) and phosphatidylinositol 3,4,5-trisphosphate (PIP3) could be involved in the dimer stabilization. Interacts (via the C-terminus) with RACK1. Interacts with CHP1. As to expression, ubiquitously expressed in all tissues tested. Expressed at highest levels in heart and skeletal muscle, followed by placenta, kidney, and liver. Expressed in the brain, in the medulla and spinal cord.

Its subcellular location is the late endosome membrane. It localises to the early endosome membrane. The protein localises to the recycling endosome membrane. It is found in the cell membrane. The protein resides in the cytoplasmic vesicle. Its subcellular location is the phagosome membrane. It carries out the reaction Na(+)(in) + H(+)(out) = Na(+)(out) + H(+)(in). The enzyme catalyses K(+)(in) + H(+)(out) = K(+)(out) + H(+)(in). In terms of biological role, endosomal Na(+), K(+)/H(+) antiporter. Mediates the electroneutral exchange of endosomal luminal H(+) for a cytosolic Na(+) or K(+). By facilitating proton efflux, SLC9A9 counteracts the acidity generated by vacuolar (V)-ATPase, thereby limiting luminal acidification. Regulates organellar pH and consequently, e.g., endosome maturation and endocytic trafficking of plasma membrane receptors and neurotransporters. Promotes the recycling of transferrin receptors back to the cell surface to facilitate additional iron uptake in the brain. Regulates synaptic transmission by regulating the luminal pH of axonal endosomes. Regulates phagosome lumenal pH, thus affecting phagosome maturation, and consequently, microbicidal activity in macrophages. Can also be active at the cell surface of specialized cells, e.g., in the inner ear hair bundles uses the high K(+) of the endolymph to regulate intracelular pH. The sequence is that of Sodium/hydrogen exchanger 9 from Homo sapiens (Human).